Here is a 206-residue protein sequence, read N- to C-terminus: N-(5'-phosphoribosyl)anthranilate isomerase (206 aa).

This sequence belongs to the TrpF family.

The enzyme catalyses N-(5-phospho-beta-D-ribosyl)anthranilate = 1-(2-carboxyphenylamino)-1-deoxy-D-ribulose 5-phosphate. The protein operates within amino-acid biosynthesis; L-tryptophan biosynthesis; L-tryptophan from chorismate: step 3/5. The polypeptide is N-(5'-phosphoribosyl)anthranilate isomerase (Pseudomonas syringae pv. syringae (strain B728a)).